A 252-amino-acid chain; its full sequence is TLC domain-containing protein 1 (252 aa).

The first 29 residues, 1–29 (MGPGWRAPSAALVGGSVALFGALRRAALA), serve as a signal peptide directing secretion. Over 30–47 (LPRPAAVRSRPGRVWRWR) the chain is Extracellular. The TLC domain occupies 41–235 (GRVWRWRNLL…LLRSDFFPSL (195 aa)). A helical transmembrane segment spans residues 48-68 (NLLVSFAHSVLAGLWALFSLW). At 69-84 (QSPELLSDIQDGYSVS) the chain is on the cytoplasmic side. Residues 85–105 (GHLLVCFSSGYFIHDSLDIIF) traverse the membrane as a helical segment. Residues 106 to 124 (NQQSRSSWEYLVHHAMAIS) are Extracellular-facing. Positions 125-145 (AFVSLIITGRFLVAAMLLLLV) form an intramembrane region, helical. Topologically, residues 146-174 (EVSNIFLTIRMLLKMSNVPSPALYEANKY) are extracellular. A helical transmembrane segment spans residues 175–195 (VNLVMYFAFRLAPQVYLTWYF). Topologically, residues 196-202 (VRYVEVQ) are cytoplasmic. A helical transmembrane segment spans residues 203–223 (GQGAFLMANLLLLDAMILMYF). Residues 224–252 (SRLLRSDFFPSLRKGSVGRDVDGEKFLID) lie on the Extracellular side of the membrane.

Interacts with CACNA1C in vitro; however the relevance of the interaction in vivo is unclear.

It is found in the cell membrane. Regulates the composition and fluidity of the plasma membrane. Inhibits the incorporation of membrane-fluidizing phospholipids containing omega-3 long-chain polyunsaturated fatty acids (LCPUFA) and thereby promotes membrane rigidity. Does not appear to have any effect on LCPUFA synthesis. This is TLC domain-containing protein 1 (TLCD1) from Gallus gallus (Chicken).